The sequence spans 129 residues: Glycine cleavage system H protein (129 aa).

The Lipoyl-binding domain occupies 24–106 (EAVVGITEHA…YGAGWLFRIK (83 aa)). K65 carries the post-translational modification N6-lipoyllysine.

The protein belongs to the GcvH family. As to quaternary structure, the glycine cleavage system is composed of four proteins: P, T, L and H. (R)-lipoate serves as cofactor.

In terms of biological role, the glycine cleavage system catalyzes the degradation of glycine. The H protein shuttles the methylamine group of glycine from the P protein to the T protein. The chain is Glycine cleavage system H protein from Aeromonas hydrophila subsp. hydrophila (strain ATCC 7966 / DSM 30187 / BCRC 13018 / CCUG 14551 / JCM 1027 / KCTC 2358 / NCIMB 9240 / NCTC 8049).